A 382-amino-acid polypeptide reads, in one-letter code: D-galactonate dehydratase (382 aa).

Residue Asp183 coordinates Mg(2+). His185 (proton donor) is an active-site residue. Mg(2+) is bound by residues Glu209 and Glu235. The active-site Proton acceptor is His285.

This sequence belongs to the mandelate racemase/muconate lactonizing enzyme family. GalD subfamily. The cofactor is Mg(2+).

The enzyme catalyses D-galactonate = 2-dehydro-3-deoxy-D-galactonate + H2O. It functions in the pathway carbohydrate acid metabolism; D-galactonate degradation; D-glyceraldehyde 3-phosphate and pyruvate from D-galactonate: step 1/3. Catalyzes the dehydration of D-galactonate to 2-keto-3-deoxy-D-galactonate. This Klebsiella pneumoniae subsp. pneumoniae (strain ATCC 700721 / MGH 78578) protein is D-galactonate dehydratase.